A 553-amino-acid polypeptide reads, in one-letter code: Glucose-6-phosphate isomerase (553 aa).

Catalysis depends on Glu-357, which acts as the Proton donor. Residues His-388 and Lys-514 contribute to the active site. Residues Ala-527 to Ala-553 form a disordered region. Residues Leu-541 to Ala-553 are compositionally biased toward basic and acidic residues.

The protein belongs to the GPI family.

It is found in the cytoplasm. The enzyme catalyses alpha-D-glucose 6-phosphate = beta-D-fructose 6-phosphate. It participates in carbohydrate biosynthesis; gluconeogenesis. The protein operates within carbohydrate degradation; glycolysis; D-glyceraldehyde 3-phosphate and glycerone phosphate from D-glucose: step 2/4. In terms of biological role, catalyzes the reversible isomerization of glucose-6-phosphate to fructose-6-phosphate. The sequence is that of Glucose-6-phosphate isomerase from Mycolicibacterium vanbaalenii (strain DSM 7251 / JCM 13017 / BCRC 16820 / KCTC 9966 / NRRL B-24157 / PYR-1) (Mycobacterium vanbaalenii).